A 156-amino-acid chain; its full sequence is Putative increased recombination centers protein 11 (156 aa).

A helical transmembrane segment spans residues 20–42 (AALGATCLLHYLTTSLSIRFFFH).

The protein resides in the membrane. This chain is Putative increased recombination centers protein 11 (IRC11), found in Saccharomyces cerevisiae (strain ATCC 204508 / S288c) (Baker's yeast).